Here is a 133-residue protein sequence, read N- to C-terminus: Small ribosomal subunit protein uS8 (133 aa).

The protein belongs to the universal ribosomal protein uS8 family. Part of the 30S ribosomal subunit.

Functionally, one of the primary rRNA binding proteins, it binds directly to 16S rRNA central domain where it helps coordinate assembly of the platform of the 30S subunit. This chain is Small ribosomal subunit protein uS8, found in Ignicoccus hospitalis (strain KIN4/I / DSM 18386 / JCM 14125).